The sequence spans 273 residues: Imidazole glycerol phosphate synthase subunit HisF (273 aa).

Catalysis depends on residues Asp-11 and Asp-134.

The protein belongs to the HisA/HisF family. As to quaternary structure, heterodimer of HisH and HisF.

It localises to the cytoplasm. The enzyme catalyses 5-[(5-phospho-1-deoxy-D-ribulos-1-ylimino)methylamino]-1-(5-phospho-beta-D-ribosyl)imidazole-4-carboxamide + L-glutamine = D-erythro-1-(imidazol-4-yl)glycerol 3-phosphate + 5-amino-1-(5-phospho-beta-D-ribosyl)imidazole-4-carboxamide + L-glutamate + H(+). It functions in the pathway amino-acid biosynthesis; L-histidine biosynthesis; L-histidine from 5-phospho-alpha-D-ribose 1-diphosphate: step 5/9. IGPS catalyzes the conversion of PRFAR and glutamine to IGP, AICAR and glutamate. The HisF subunit catalyzes the cyclization activity that produces IGP and AICAR from PRFAR using the ammonia provided by the HisH subunit. In Methanosarcina mazei (strain ATCC BAA-159 / DSM 3647 / Goe1 / Go1 / JCM 11833 / OCM 88) (Methanosarcina frisia), this protein is Imidazole glycerol phosphate synthase subunit HisF.